Here is a 319-residue protein sequence, read N- to C-terminus: Ribosomal RNA small subunit methyltransferase H (319 aa).

Residues 35 to 37 (AGH), D55, F84, D104, and Q111 each bind S-adenosyl-L-methionine.

It belongs to the methyltransferase superfamily. RsmH family.

The protein resides in the cytoplasm. It catalyses the reaction cytidine(1402) in 16S rRNA + S-adenosyl-L-methionine = N(4)-methylcytidine(1402) in 16S rRNA + S-adenosyl-L-homocysteine + H(+). Functionally, specifically methylates the N4 position of cytidine in position 1402 (C1402) of 16S rRNA. The polypeptide is Ribosomal RNA small subunit methyltransferase H (Enterococcus hirae).